A 426-amino-acid chain; its full sequence is 6-Hydroxy-7-prenyldeoxybrevianamide E synthase notC (426 aa).

Position 94 (Glu-94) interacts with substrate. Positions 105, 191, and 193 each coordinate dimethylallyl diphosphate. Tyr-195 provides a ligand contact to substrate. Positions 267, 269, 352, 354, 418, and 422 each coordinate dimethylallyl diphosphate.

The protein belongs to the tryptophan dimethylallyltransferase family.

The enzyme catalyses 6-hydroxydeoxybrevianamide E + dimethylallyl diphosphate = notoamide S + diphosphate. It participates in alkaloid biosynthesis. Addition of 5 mM Mg(2+), Ca(2+) or Mn(2+) slightly enhances catalysis (about 100-120%). Significant reduction of enzyme activity (2%-35%) is observed with Cu(2+), Zn(2+), Fe(2+), or Sn(2+) (5 mM). Prenyltransferase; part of the gene cluster that mediates the biosynthesis of notoamide, a fungal indole alkaloid that belongs to a family of natural products containing a characteristic bicyclo[2.2.2]diazaoctane core. The first step of notoamide biosynthesis involves coupling of L-proline and L-tryptophan by the bimodular NRPS notE, to produce cyclo-L-tryptophan-L-proline called brevianamide F. The reverse prenyltransferase notF then acts as a deoxybrevianamide E synthase and converts brevianamide F to deoxybrevianamide E via reverse prenylation at C-2 of the indole ring leading to the bicyclo[2.2.2]diazaoctane core. Deoxybrevianamide E is further hydroxylated at C-6 of the indole ring, likely catalyzed by the cytochrome P450 monooxygenase notG, to yield 6-hydroxy-deoxybrevianamide E. 6-hydroxy-deoxybrevianamide E is a specific substrate of the prenyltransferase notC for normal prenylation at C-7 to produce 6-hydroxy-7-prenyl-deoxybrevianamide, also called notoamide S. As the proposed pivotal branching point in notoamide biosynthesis, notoamide S can be diverted to notoamide E through an oxidative pyran ring closure putatively catalyzed by either notH cytochrome P450 monooxygenase or the notD FAD-linked oxidoreductase. This step would be followed by an indole 2,3-epoxidation-initiated pinacol-like rearrangement catalyzed by the notB FAD-dependent monooxygenase leading to the formation of notoamide C and notoamide D. On the other hand notoamide S is converted to notoamide T by notH (or notD), a bifunctional oxidase that also functions as the intramolecular Diels-Alderase responsible for generation of (+)-notoamide T. To generate antipodal (-)-notoaminide T, notH' (or notD') in Aspergillus versicolor is expected to catalyze a Diels-Alder reaction leading to the opposite stereochemistry. The remaining oxidoreductase notD (or notH) likely catalyzes the oxidative pyran ring formation to yield (+)-stephacidin A. The FAD-dependent monooxygenase notI is highly similar to notB and is predicted to catalyze a similar conversion from (+)-stephacidin A to (-)-notoamide B via the 2,3-epoxidation of (+)-stephacidin A followed by a pinacol-type rearrangement. Finally, it remains unclear which enzyme could be responsible for the final hydroxylation steps leading to notoamide A and sclerotiamide. The polypeptide is 6-Hydroxy-7-prenyldeoxybrevianamide E synthase notC (Aspergillus sp. (strain MF297-2)).